A 212-amino-acid polypeptide reads, in one-letter code: Ribosome biogenesis protein RLP7 (212 aa).

The protein belongs to the universal ribosomal protein uL30 family.

The protein resides in the nucleus. It localises to the nucleolus. Its function is as follows. Involved in the biogenesis of the 60S ribosomal subunit. May act as a specificity factor that binds precursor rRNAs and tethers the enzymes that carry out the early 5' to 3' exonucleolytic reactions that generate the mature rRNAs. The polypeptide is Ribosome biogenesis protein RLP7 (RLP7) (Cyberlindnera jadinii (Torula yeast)).